Consider the following 480-residue polypeptide: Transmembrane protein 161A (480 aa).

The N-terminal stretch at 1-28 (MAVLGVQLVVTLFTATLMHRLAPHCSFA) is a signal peptide. Residues 29–98 (RWLLCNGSLF…LTAVDALVLR (70 aa)) are Extracellular-facing. Residue N34 is glycosylated (N-linked (GlcNAc...) asparagine). Residues 99–119 (FFLEYQWFVDFAVYSVGVYLF) form a helical membrane-spanning segment. The Cytoplasmic segment spans residues 120–134 (TEAYYFVLGPVQETN). The chain crosses the membrane as a helical span at residues 135-155 (IAVFWCLLTLAFSLKVFLMVT). At 156–166 (RLYFSTKEGGE) the chain is on the extracellular side. Residues 167-187 (RSVCLSFAFLFLLLAMLVQVV) form a helical membrane-spanning segment. Residues 188–224 (REETLELGLEPGLASMTQHLEPILKKQDWDWTLPVIK) lie on the Cytoplasmic side of the membrane. Residues 225–245 (LAIRLGLAVLGSLLGAFLIFP) traverse the membrane as a helical segment. Residues 246–263 (GLRLAQTHQDALTLSADR) are Extracellular-facing. The chain crosses the membrane as a helical span at residues 264–284 (PLLQLLLHTSFLSPLCTLWLW). At 285 to 304 (TKPVARDFLYQAPTRNMTFS) the chain is on the cytoplasmic side. Residues 305 to 325 (VPSEGAFDSLRLWVLVALCLL) traverse the membrane as a helical segment. Residues 326–370 (RLAVTRPHLQAYLCLAKARVEQLRKEAGRIEAREIQQRVVRVYCY) lie on the Extracellular side of the membrane. A helical membrane pass occupies residues 371–391 (VTVVSLQYLTPLILTLHCTLL). Over 392–450 (LKTLGGYSWALSSTPPPLAPSQPSEALIPVDPAGDEAQQTAAQVAGILGGLLTPLFLRG) the chain is Cytoplasmic. A helical membrane pass occupies residues 451-473 (MLAYIIWWTAACQLLSSLFGLYF). The Extracellular portion of the chain corresponds to 474-480 (HQHLAAS).

This sequence belongs to the TMEM161 family.

The protein resides in the membrane. May play a role in protection against oxidative stress. Overexpression leads to reduced levels of oxidant-induced DNA damage and apoptosis. In Mus musculus (Mouse), this protein is Transmembrane protein 161A (Tmem161a).